We begin with the raw amino-acid sequence, 149 residues long: MALKDEFATRNFSIYGQWLGILSMILCFALGIANIFTFRPIIIVFSVITLCFSFVILFVEVPLLLRICPTSPTFDNLIRKISTNYTRAAAYGVMAVVVFLSCIDRTTSLLVPGIFLSFTGICYALAALKGQAFVGSKTLGGAGVAQMIV.

Asn-11 carries an N-linked (GlcNAc...) asparagine glycan. The next 4 membrane-spanning stretches (helical) occupy residues 18 to 38, 41 to 61, 84 to 103, and 108 to 128; these read WLGILSMILCFALGIANIFTF, IIIVFSVITLCFSFVILFVEV, NYTRAAAYGVMAVVVFLSCI, and SLLVPGIFLSFTGICYALAAL.

Belongs to the TVP18 family.

The protein resides in the golgi apparatus membrane. Golgi membrane protein involved in vesicular trafficking. This chain is Golgi apparatus membrane protein tvp-18 (tvp-18), found in Neurospora crassa (strain ATCC 24698 / 74-OR23-1A / CBS 708.71 / DSM 1257 / FGSC 987).